A 98-amino-acid polypeptide reads, in one-letter code: NADH-ubiquinone oxidoreductase chain 4L (98 aa).

3 helical membrane-spanning segments follow: residues 1-21 (MALI…GLLL), 29-49 (SLLC…VMIL), and 61-81 (IVLL…LVMV).

It belongs to the complex I subunit 4L family. Core subunit of respiratory chain NADH dehydrogenase (Complex I) which is composed of 45 different subunits.

Its subcellular location is the mitochondrion inner membrane. The enzyme catalyses a ubiquinone + NADH + 5 H(+)(in) = a ubiquinol + NAD(+) + 4 H(+)(out). Its function is as follows. Core subunit of the mitochondrial membrane respiratory chain NADH dehydrogenase (Complex I) which catalyzes electron transfer from NADH through the respiratory chain, using ubiquinone as an electron acceptor. Part of the enzyme membrane arm which is embedded in the lipid bilayer and involved in proton translocation. The polypeptide is NADH-ubiquinone oxidoreductase chain 4L (MT-ND4L) (Rhinolophus monoceros (Formosan lesser horseshoe bat)).